The sequence spans 103 residues: Omega toxin Ap5 (103 aa).

Residues 1–22 (MNTIQVILFAVVLVLTVTVGQA) form the signal peptide. The propeptide occupies 23–57 (DEDSAETSLLRKLEEAEASMFGQYLEESKNSREKR). Cystine bridges form between Cys58–Cys73, Cys65–Cys78, and Cys72–Cys93.

This sequence belongs to the neurotoxin 14 (magi-1) family. 08 (Ltx-4) subfamily. As to expression, expressed by the venom duct.

It localises to the secreted. Its function is as follows. Shows a weak inhibition on the voltage-gated calcium channel Cav2.1/CACNA1A and some voltage-gated sodium channels (with 1 uM toxin tested: 22.08% inhibition on Cav2.1/CACNA1A, 6.6% on Nav1.1/SCN1A, 4.2% on Nav1.5, and 16% on Nav1.7). Functionally, shows a weak inhibition on the voltage-gated calcium channel Cav2.1/CACNA1A (28.06% at 1 uM). This chain is Omega toxin Ap5, found in Acanthoscurria paulensis (Brazilian giant black tarantula spider).